The chain runs to 61 residues: 2S seed storage albumin protein (61 aa).

It belongs to the 2S seed storage albumins family. As to quaternary structure, the mature protein consists of a small and a large chain linked by 2 disulfide bonds.

Functionally, this is a 2S seed storage protein. Inhibits cell-free protein synthesis. This chain is 2S seed storage albumin protein, found in Cucurbita moschata (Winter crookneck squash).